The sequence spans 226 residues: MNHTVIQKLQKILGYTFIKKDLLIQALTHRSANSKHNERLEFLGDSILSFVIANALYHCFPHVNEGDMSRMRATLVRGHTLAKIAYEFDLGDYLQLGQGELKSGGFRRESILANTVEALIGSIFLDSNLKTIEKLILKWYKNRLKAINPSDTQKDPKTRLQEYLQSKHLPLPSYLVEQVYGEAHNQLFTIYCEISGINEKTIGIGSSRRKAEQEAAQNALIKLGIE.

One can recognise an RNase III domain in the interval 6–128 (IQKLQKILGY…LIGSIFLDSN (123 aa)). Glu-41 serves as a coordination point for Mg(2+). Asp-45 is a catalytic residue. Positions 114 and 117 each coordinate Mg(2+). Residue Glu-117 is part of the active site. In terms of domain architecture, DRBM spans 155–225 (DPKTRLQEYL…AQNALIKLGI (71 aa)).

Belongs to the ribonuclease III family. In terms of assembly, homodimer. The cofactor is Mg(2+).

It is found in the cytoplasm. The enzyme catalyses Endonucleolytic cleavage to 5'-phosphomonoester.. Functionally, digests double-stranded RNA. Involved in the processing of primary rRNA transcript to yield the immediate precursors to the large and small rRNAs (23S and 16S). Processes some mRNAs, and tRNAs when they are encoded in the rRNA operon. Processes pre-crRNA and tracrRNA of type II CRISPR loci if present in the organism. This is Ribonuclease 3 from Buchnera aphidicola subsp. Baizongia pistaciae (strain Bp).